The following is a 165-amino-acid chain: Protein-export protein SecB (165 aa).

This sequence belongs to the SecB family. Homotetramer, a dimer of dimers. One homotetramer interacts with 1 SecA dimer.

The protein resides in the cytoplasm. In terms of biological role, one of the proteins required for the normal export of preproteins out of the cell cytoplasm. It is a molecular chaperone that binds to a subset of precursor proteins, maintaining them in a translocation-competent state. It also specifically binds to its receptor SecA. In Marinobacter nauticus (strain ATCC 700491 / DSM 11845 / VT8) (Marinobacter aquaeolei), this protein is Protein-export protein SecB.